Consider the following 301-residue polypeptide: Acetylglutamate kinase (301 aa).

Substrate-binding positions include 64 to 65 (GG), R86, and N181.

The protein belongs to the acetylglutamate kinase family. ArgB subfamily.

Its subcellular location is the cytoplasm. It carries out the reaction N-acetyl-L-glutamate + ATP = N-acetyl-L-glutamyl 5-phosphate + ADP. Its pathway is amino-acid biosynthesis; L-arginine biosynthesis; N(2)-acetyl-L-ornithine from L-glutamate: step 2/4. In terms of biological role, catalyzes the ATP-dependent phosphorylation of N-acetyl-L-glutamate. This Aliarcobacter butzleri (strain RM4018) (Arcobacter butzleri) protein is Acetylglutamate kinase.